A 312-amino-acid polypeptide reads, in one-letter code: 2-dehydropantoate 2-reductase (312 aa).

NADP(+) is bound by residues 7–12 (GAGAMG), asparagine 105, and alanine 131. Position 105 (asparagine 105) interacts with substrate. The active-site Proton donor is the lysine 187. Residues asparagine 191, asparagine 195, and serine 260 each coordinate substrate. Residue glutamate 273 coordinates NADP(+).

Belongs to the ketopantoate reductase family.

Its subcellular location is the cytoplasm. It catalyses the reaction (R)-pantoate + NADP(+) = 2-dehydropantoate + NADPH + H(+). It participates in cofactor biosynthesis; (R)-pantothenate biosynthesis; (R)-pantoate from 3-methyl-2-oxobutanoate: step 2/2. In terms of biological role, catalyzes the NADPH-dependent reduction of ketopantoate into pantoic acid. The protein is 2-dehydropantoate 2-reductase of Lactococcus lactis subsp. lactis (strain IL1403) (Streptococcus lactis).